The sequence spans 160 residues: Small ribosomal subunit protein uS7 (160 aa).

Belongs to the universal ribosomal protein uS7 family. As to quaternary structure, part of the 30S ribosomal subunit. Contacts proteins S9 and S11.

Functionally, one of the primary rRNA binding proteins, it binds directly to 16S rRNA where it nucleates assembly of the head domain of the 30S subunit. Is located at the subunit interface close to the decoding center, probably blocks exit of the E-site tRNA. The polypeptide is Small ribosomal subunit protein uS7 (Ehrlichia canis (strain Jake)).